The following is a 320-amino-acid chain: Ferrochelatase (320 aa).

Fe cation-binding residues include histidine 194 and glutamate 272.

Belongs to the ferrochelatase family.

The protein resides in the cytoplasm. The enzyme catalyses heme b + 2 H(+) = protoporphyrin IX + Fe(2+). Its pathway is porphyrin-containing compound metabolism; protoheme biosynthesis; protoheme from protoporphyrin-IX: step 1/1. Its function is as follows. Catalyzes the ferrous insertion into protoporphyrin IX. This is Ferrochelatase from Desulfotalea psychrophila (strain LSv54 / DSM 12343).